The primary structure comprises 229 residues: Uracil-DNA glycosylase (229 aa).

Asp64 acts as the Proton acceptor in catalysis.

It belongs to the uracil-DNA glycosylase (UDG) superfamily. UNG family.

It localises to the cytoplasm. It carries out the reaction Hydrolyzes single-stranded DNA or mismatched double-stranded DNA and polynucleotides, releasing free uracil.. In terms of biological role, excises uracil residues from the DNA which can arise as a result of misincorporation of dUMP residues by DNA polymerase or due to deamination of cytosine. This chain is Uracil-DNA glycosylase, found in Salmonella agona (strain SL483).